The chain runs to 118 residues: Small ribosomal subunit protein uS13 (118 aa).

The disordered stretch occupies residues 94–118 (NLPVRGQNTKNNARTRKGPIRSIKR). Residues 106 to 118 (ARTRKGPIRSIKR) are compositionally biased toward basic residues.

The protein belongs to the universal ribosomal protein uS13 family. In terms of assembly, part of the 30S ribosomal subunit. Forms a loose heterodimer with protein S19. Forms two bridges to the 50S subunit in the 70S ribosome.

Located at the top of the head of the 30S subunit, it contacts several helices of the 16S rRNA. In the 70S ribosome it contacts the 23S rRNA (bridge B1a) and protein L5 of the 50S subunit (bridge B1b), connecting the 2 subunits; these bridges are implicated in subunit movement. Contacts the tRNAs in the A and P-sites. The sequence is that of Small ribosomal subunit protein uS13 from Psychrobacter sp. (strain PRwf-1).